Reading from the N-terminus, the 567-residue chain is Geranylgeranyl transferase type-2 subunit alpha (567 aa).

PFTA repeat units lie at residues 44–78, 88–122, 124–158, 159–193, 207–241, and 363–397; these read LDES…HLET, LVKA…RLPE, NWAR…QAAV, APAE…QLHP, VLLK…RAEP, and VLQS…ALDP. S98 is subject to Phosphoserine. LRR repeat units lie at residues 442 to 463, 464 to 486, 487 to 508, 509 to 530, and 534 to 555; these read DVRV…EQLL, LVTH…AALR, CLEV…ANLP, RLQE…QPLV, and RLVL…QERL.

This sequence belongs to the protein prenyltransferase subunit alpha family. As to quaternary structure, heterotrimer composed of RABGGTA, RABGGTB and CHM; within this trimer, RABGGTA and RABGGTB form the catalytic component B, while CHM (component A) mediates peptide substrate binding. The Rab GGTase dimer (RGGT) interacts with CHM (component A) prior to Rab protein binding; the association is stabilized by geranylgeranyl pyrophosphate (GGpp). The CHM:RGGT:Rab complex is destabilized by GGpp. Interacts with non-phosphorylated form of RAB8A; phosphorylation of RAB8A at 'Thr-72' disrupts this interaction. As to expression, most abundant in the heart, brain, spleen and liver. Less in the lung, muscle, kidney and testis; in these tissues less abundant than the beta subunit.

The catalysed reaction is geranylgeranyl diphosphate + L-cysteinyl-[protein] = S-geranylgeranyl-L-cysteinyl-[protein] + diphosphate. Its activity is regulated as follows. The enzymatic reaction requires the aid of a Rab escort protein (also called component A), such as CHM. In terms of biological role, catalyzes the transfer of a geranylgeranyl moiety from geranylgeranyl diphosphate to both cysteines of Rab proteins with the C-terminal sequence -XXCC, -XCXC and -CCXX, such as RAB1A, RAB3A, RAB5A and RAB7A. The polypeptide is Geranylgeranyl transferase type-2 subunit alpha (Rabggta) (Rattus norvegicus (Rat)).